Consider the following 125-residue polypeptide: Cu-Zn superoxide dismutase-like protein OPG175 (125 aa).

Cys52 and Cys102 form a disulfide bridge.

Belongs to the Cu-Zn superoxide dismutase family.

Its subcellular location is the virion. It localises to the host cytoplasm. Functionally, superoxide dismutase-like protein with no enzymatic activity. This is Cu-Zn superoxide dismutase-like protein OPG175 (OPG175) from Cowpox virus (strain Brighton Red) (CPV).